The sequence spans 410 residues: Threonylcarbamoyladenosine tRNA methylthiotransferase MtaB (410 aa).

One can recognise an MTTase N-terminal domain in the interval 1 to 113; the sequence is MKVAFETLGC…LLKILEEYLE (113 aa). [4Fe-4S] cluster-binding residues include cysteine 10, cysteine 46, cysteine 77, cysteine 152, cysteine 156, and cysteine 159. The Radical SAM core domain occupies 138 to 366; sequence YFEGVRPFLK…KELDQKKRQE (229 aa).

Belongs to the methylthiotransferase family. MtaB subfamily. [4Fe-4S] cluster serves as cofactor.

Its subcellular location is the cytoplasm. The catalysed reaction is N(6)-L-threonylcarbamoyladenosine(37) in tRNA + (sulfur carrier)-SH + AH2 + 2 S-adenosyl-L-methionine = 2-methylsulfanyl-N(6)-L-threonylcarbamoyladenosine(37) in tRNA + (sulfur carrier)-H + 5'-deoxyadenosine + L-methionine + A + S-adenosyl-L-homocysteine + 2 H(+). In terms of biological role, catalyzes the methylthiolation of N6-threonylcarbamoyladenosine (t(6)A), leading to the formation of 2-methylthio-N6-threonylcarbamoyladenosine (ms(2)t(6)A) at position 37 in tRNAs that read codons beginning with adenine. In Aquifex aeolicus (strain VF5), this protein is Threonylcarbamoyladenosine tRNA methylthiotransferase MtaB (mtaB).